Consider the following 358-residue polypeptide: UDP-N-acetylglucosamine--N-acetylmuramyl-(pentapeptide) pyrophosphoryl-undecaprenol N-acetylglucosamine transferase (358 aa).

UDP-N-acetyl-alpha-D-glucosamine contacts are provided by residues 11–13, Asn124, Arg164, Ser195, and Gln291; that span reads TGG.

It belongs to the glycosyltransferase 28 family. MurG subfamily.

The protein localises to the cell inner membrane. It carries out the reaction di-trans,octa-cis-undecaprenyl diphospho-N-acetyl-alpha-D-muramoyl-L-alanyl-D-glutamyl-meso-2,6-diaminopimeloyl-D-alanyl-D-alanine + UDP-N-acetyl-alpha-D-glucosamine = di-trans,octa-cis-undecaprenyl diphospho-[N-acetyl-alpha-D-glucosaminyl-(1-&gt;4)]-N-acetyl-alpha-D-muramoyl-L-alanyl-D-glutamyl-meso-2,6-diaminopimeloyl-D-alanyl-D-alanine + UDP + H(+). The protein operates within cell wall biogenesis; peptidoglycan biosynthesis. Cell wall formation. Catalyzes the transfer of a GlcNAc subunit on undecaprenyl-pyrophosphoryl-MurNAc-pentapeptide (lipid intermediate I) to form undecaprenyl-pyrophosphoryl-MurNAc-(pentapeptide)GlcNAc (lipid intermediate II). This is UDP-N-acetylglucosamine--N-acetylmuramyl-(pentapeptide) pyrophosphoryl-undecaprenol N-acetylglucosamine transferase from Leptospira borgpetersenii serovar Hardjo-bovis (strain JB197).